Here is a 68-residue protein sequence, read N- to C-terminus: Ribosome modulation factor (68 aa).

The protein belongs to the ribosome modulation factor family.

Its subcellular location is the cytoplasm. Its function is as follows. During stationary phase, converts 70S ribosomes to an inactive dimeric form (100S ribosomes). This is Ribosome modulation factor from Saccharophagus degradans (strain 2-40 / ATCC 43961 / DSM 17024).